Consider the following 414-residue polypeptide: MSKKISGGSVVEMQGDEMTRIIWELIKEKLIFPYVELDLHSYDLGIENRDATNDQVTKDAAEAIKKYNVGVKCATITPDEKRVEEFKLKQMWKSPNGTIRNILGGTVFREAIICKNIPRLVSGWVKPIIIGRHAYGDQYRATDFVVPGPGKVEITYTPSDGTQKVTYLVHNFEEGGGVAMGMYNQDKSIEDFAHSSFQMALSKGWPLYLSTKNTILKKYDGRFKDIFQEIYDKQYKSQFEARKIWYEHRLIDDMVAQAMKSEGGFIWACKNYDGDVQSDSVAQGYGSLGMMTSVLVCPDGKTVEAEAAHGTVTRHYRMYQKGQETSTNPIASIFAWTRGLAHRAKLDNNKELAFFANALEEVSVETIEAGFMTKDLAACIKGLPNVQRSDYLNTFEFMDKLGENLKIKLAQAKL.

At Ser-2 the chain carries N-acetylserine. The residue at position 42 (Tyr-42) is a Phosphotyrosine. An NADP(+)-binding site is contributed by 75-77 (TIT). Thr-77 contacts substrate. Position 81 is an N6-acetyllysine (Lys-81). Position 82 (Arg-82) interacts with NADP(+). Residues 94–100 (SPNGTIR) and Arg-109 each bind substrate. N6-succinyllysine is present on Lys-126. Residues Arg-132 and Lys-212 each contribute to the substrate site. An N6-acetyllysine mark is found at Lys-224, Lys-233, and Lys-243. Asp-252 contacts Mn(2+). Lys-260 contacts NADP(+). Residues Asp-275 and Asp-279 each contribute to the Mn(2+) site. 310–315 (GTVTRH) is a binding site for NADP(+). Lys-321 carries the N6-acetyllysine modification. Asn-328 contacts NADP(+). Position 389 is a phosphoserine (Ser-389). N6-succinyllysine is present on Lys-400.

This sequence belongs to the isocitrate and isopropylmalate dehydrogenases family. Homodimer. Mg(2+) is required as a cofactor. The cofactor is Mn(2+). Acetylation at Lys-374 dramatically reduces catalytic activity.

The protein localises to the cytoplasm. It localises to the cytosol. It catalyses the reaction D-threo-isocitrate + NADP(+) = 2-oxoglutarate + CO2 + NADPH. Functionally, catalyzes the NADP(+)-dependent oxidative decarboxylation of isocitrate (D-threo-isocitrate) to 2-ketoglutarate (2-oxoglutarate), which is required by other enzymes such as the phytanoyl-CoA dioxygenase. Plays a critical role in the generation of NADPH, an important cofactor in many biosynthesis pathways. May act as a corneal epithelial crystallin and may be involved in maintaining corneal epithelial transparency. The chain is Isocitrate dehydrogenase [NADP] cytoplasmic (IDH1) from Pongo abelii (Sumatran orangutan).